The following is a 278-amino-acid chain: Small ribosomal subunit protein uS3 (278 aa).

The KH type-2 domain maps to isoleucine 38–lysine 106. Residues alanine 215 to serine 278 form a disordered region. The segment covering serine 238 to serine 278 has biased composition (low complexity).

This sequence belongs to the universal ribosomal protein uS3 family. Part of the 30S ribosomal subunit. Forms a tight complex with proteins S10 and S14.

Functionally, binds the lower part of the 30S subunit head. Binds mRNA in the 70S ribosome, positioning it for translation. In Mycolicibacterium gilvum (strain PYR-GCK) (Mycobacterium gilvum (strain PYR-GCK)), this protein is Small ribosomal subunit protein uS3.